Consider the following 285-residue polypeptide: Foldase protein PrsA 2 (285 aa).

Residues 1–20 (MRGKHIFIITALISILMLSA) form the signal peptide. A lipid anchor (N-palmitoyl cysteine) is attached at Cys-21. Residue Cys-21 is the site of S-diacylglycerol cysteine attachment. One can recognise a PpiC domain in the interval 134–224 (KPEIKASHIL…NGYHVIKLTD (91 aa)).

The protein belongs to the PrsA family.

The protein resides in the cell membrane. It catalyses the reaction [protein]-peptidylproline (omega=180) = [protein]-peptidylproline (omega=0). Plays a major role in protein secretion by helping the post-translocational extracellular folding of several secreted proteins. The polypeptide is Foldase protein PrsA 2 (prsA2) (Bacillus cereus (strain ATCC 14579 / DSM 31 / CCUG 7414 / JCM 2152 / NBRC 15305 / NCIMB 9373 / NCTC 2599 / NRRL B-3711)).